A 143-amino-acid polypeptide reads, in one-letter code: Large ribosomal subunit protein eL28z (143 aa).

The protein belongs to the eukaryotic ribosomal protein eL28 family. Component of the large ribosomal subunit. As to expression, expressed in seedlings, roots, stems, leaves, inflorescences and siliques.

Its subcellular location is the cytoplasm. The protein resides in the nucleus. The protein localises to the nucleolus. It is found in the nucleoplasm. Component of the large ribosomal subunit. Essential in leaf polarity establishment, probably having a role for translation in leaf dorsoventral patterning to specify leaf adaxial identity. The sequence is that of Large ribosomal subunit protein eL28z from Arabidopsis thaliana (Mouse-ear cress).